The following is a 242-amino-acid chain: DNA repair protein RecO (242 aa).

Belongs to the RecO family. In terms of assembly, monomer.

Its function is as follows. Involved in DNA repair and RecF pathway recombination. The chain is DNA repair protein RecO from Shigella sonnei (strain Ss046).